Reading from the N-terminus, the 1000-residue chain is Integrin alpha-PS5 (1000 aa).

FG-GAP repeat units follow at residues 15–74 (KHLK…GSCS), 75–137 (HYVL…DTPP), 145–198 (SLIP…AAQG), 199–261 (SYAV…GEIV), 262–323 (RKLH…FKFE), 324–379 (KKII…GLRD), and 386–448 (DAPS…SESR). Residue Asn58 is glycosylated (N-linked (GlcNAc...) asparagine). N-linked (GlcNAc...) asparagine glycosylation occurs at Asn231. Asn516, Asn592, Asn622, Asn732, Asn771, Asn829, Asn842, Asn853, and Asn922 each carry an N-linked (GlcNAc...) asparagine glycan. The chain crosses the membrane as a helical span at residues 930-950 (IWYIILSLIAGHLLLGAMTYI). Residues 951–1000 (LYKLRFFKRGKKEELKRLLEEHRSETKEPATDCEGNQEEINVEMHSDLEN) lie on the Cytoplasmic side of the membrane. Over residues 971–980 (EHRSETKEPA) the composition is skewed to basic and acidic residues. The segment at 971-1000 (EHRSETKEPATDCEGNQEEINVEMHSDLEN) is disordered.

The protein belongs to the integrin alpha chain family. In terms of assembly, heterodimer of an alpha and a beta subunit. Alpha-PS5 associates with beta-PS. As to expression, expressed in all follicle cells overlying the oocyte during mid-oogenesis, the strongest expression is observed in the cells covering the anterior end of the oocyte and in the cells forming the dorsal appendages. After completion of oocyte enlargement, expression in main body follicle cells is down-regulated but persists strongly in the dorsal appendage forming cells. Expressed in lamellocytes.

It is found in the membrane. Functionally, possible role in cell-cell interactions. Minor involvement in the establishment of the oocyte anterior-posterior length. The chain is Integrin alpha-PS5 from Drosophila melanogaster (Fruit fly).